The following is a 614-amino-acid chain: Interleukin-18 receptor accessory protein (614 aa).

An N-terminal signal peptide occupies residues 1-19; that stretch reads MLCLGWVFLWFVAGEKTTG. Over 20-356 the chain is Extracellular; it reads FNHSACATKK…RTIRLRKKEE (337 aa). N-linked (GlcNAc...) asparagine glycosylation is present at asparagine 21. The cysteines at positions 46 and 126 are disulfide-linked. Positions 59-78 are disordered; that stretch reads ASQLSPTQSPAHKPCSGSQK. Ig-like C2-type domains follow at residues 148-234 and 250-352; these read PQRN…WTVR and PEIL…IRLR. Residue asparagine 151 is glycosylated (N-linked (GlcNAc...) asparagine). 3 disulfide bridges follow: cysteine 154-cysteine 179, cysteine 174-cysteine 220, and cysteine 179-cysteine 220. Residue asparagine 227 is glycosylated (N-linked (GlcNAc...) asparagine). Cysteine 272 and cysteine 336 form a disulfide bridge. An N-linked (GlcNAc...) asparagine glycan is attached at asparagine 344. A helical transmembrane segment spans residues 357-377; the sequence is VVFVYILLGTALMLVGVLVAA. The Cytoplasmic portion of the chain corresponds to 378–614; it reads AFLYWYWIEV…LLLYSDQKRC (237 aa). The TIR domain maps to 405–558; it reads KEFDAFVSYS…RFWTQIRYHM (154 aa). Glutamate 492 is an active-site residue.

Belongs to the interleukin-1 receptor family. As to quaternary structure, forms a ternary complex with IL18 and IL18R1. Within this complex, IL18R1 is involved in ligand-binding and IL18RAP in signaling leading to NF-kappa-B and JNK activation.

The protein localises to the cell membrane. It catalyses the reaction NAD(+) + H2O = ADP-D-ribose + nicotinamide + H(+). Its function is as follows. Within the IL18 receptor complex, does not mediate IL18-binding, but involved in IL18-dependent signal transduction, leading to NF-kappa-B and JNK activation. May play a role in IL18-mediated IFNG synthesis from T-helper 1 (Th1) cells. This chain is Interleukin-18 receptor accessory protein, found in Mus musculus (Mouse).